The following is a 414-amino-acid chain: Glycogen synthase (414 aa).

This sequence belongs to the glycosyltransferase group 1 family.

It catalyses the reaction [(1-&gt;4)-alpha-D-glucosyl](n) + UDP-alpha-D-glucose = [(1-&gt;4)-alpha-D-glucosyl](n+1) + UDP + H(+). It participates in glycan biosynthesis; glycogen biosynthesis. Glucosyltransferase that uses UDP-glucose as the sugar donor to elongate alpha-(1-&gt;4)-glucans. Is involved in the biosynthesis of both 6-O-methylglucosyl lipopolysaccharides (MGLP) and glycogen. May also use ADP-glucose as substrate. The chain is Glycogen synthase from Mycobacterium tuberculosis (strain CDC 1551 / Oshkosh).